Reading from the N-terminus, the 305-residue chain is Protoheme IX farnesyltransferase (305 aa).

A run of 9 helical transmembrane segments spans residues 31–51 (VMSLVIFTGFVGMWLAPYSVH), 52–72 (PFIAGIAVVCIALGAGSAGAI), 96–118 (VIESDEALSFGLITGFFAVFFMA), 123–145 (LLASFLLLFTIFYYICIYTIWLK), 151–171 (NIVIGGVSGALPPVIGYAAVS), 179–199 (IILFLIIFIWTPPHSWALALF), 225–245 (ILIYSILLFIVSLMPFFIGMN), 247–267 (FIYLIISGILGVVFLYYAGSL), and 281–301 (FAYSIFYLFFIFLLLYSTNTI).

It belongs to the UbiA prenyltransferase family. Protoheme IX farnesyltransferase subfamily.

Its subcellular location is the cell inner membrane. The catalysed reaction is heme b + (2E,6E)-farnesyl diphosphate + H2O = Fe(II)-heme o + diphosphate. It functions in the pathway porphyrin-containing compound metabolism; heme O biosynthesis; heme O from protoheme: step 1/1. Its function is as follows. Converts heme B (protoheme IX) to heme O by substitution of the vinyl group on carbon 2 of heme B porphyrin ring with a hydroxyethyl farnesyl side group. The chain is Protoheme IX farnesyltransferase from Rickettsia rickettsii (strain Iowa).